A 48-amino-acid polypeptide reads, in one-letter code: Sperm protamine P1 (48 aa).

The protein belongs to the protamine P1 family. Testis.

It is found in the nucleus. Its subcellular location is the chromosome. Protamines substitute for histones in the chromatin of sperm during the haploid phase of spermatogenesis. They compact sperm DNA into a highly condensed, stable and inactive complex. This Monophyllus redmani (Greater Antillean long-tongued bat) protein is Sperm protamine P1 (PRM1).